The sequence spans 335 residues: Terpene synthase 4 (335 aa).

The DDxx(x)D/E motif signature appears at 103-108 (DDYIFE). Residues 243–251 (NDLYSFNRE) carry the NDxxSxxxD/E motif motif.

The protein belongs to the terpene synthase family.

The catalysed reaction is (2E,6E)-farnesyl diphosphate + H2O = (6E)-nerolidol + diphosphate. In terms of biological role, terpene synthase that converts its substrate farnesyl diphosphate (FPP) into the sesquiterpene (E)-nerolidol. The protein is Terpene synthase 4 of Dictyostelium discoideum (Social amoeba).